Here is a 352-residue protein sequence, read N- to C-terminus: UDP-N-acetylglucosamine--N-acetylmuramyl-(pentapeptide) pyrophosphoryl-undecaprenol N-acetylglucosamine transferase (352 aa).

UDP-N-acetyl-alpha-D-glucosamine-binding residues include Ser195 and Gln287.

It belongs to the glycosyltransferase 28 family. MurG subfamily.

The protein localises to the cell membrane. The catalysed reaction is Mur2Ac(oyl-L-Ala-gamma-D-Glu-L-Lys-D-Ala-D-Ala)-di-trans,octa-cis-undecaprenyl diphosphate + UDP-N-acetyl-alpha-D-glucosamine = beta-D-GlcNAc-(1-&gt;4)-Mur2Ac(oyl-L-Ala-gamma-D-Glu-L-Lys-D-Ala-D-Ala)-di-trans,octa-cis-undecaprenyl diphosphate + UDP + H(+). It participates in cell wall biogenesis; peptidoglycan biosynthesis. Cell wall formation. Catalyzes the transfer of a GlcNAc subunit on undecaprenyl-pyrophosphoryl-MurNAc-pentapeptide (lipid intermediate I) to form undecaprenyl-pyrophosphoryl-MurNAc-(pentapeptide)GlcNAc (lipid intermediate II). This chain is UDP-N-acetylglucosamine--N-acetylmuramyl-(pentapeptide) pyrophosphoryl-undecaprenol N-acetylglucosamine transferase, found in Streptococcus pneumoniae serotype 4 (strain ATCC BAA-334 / TIGR4).